Consider the following 328-residue polypeptide: GMP reductase (328 aa).

Catalysis depends on cysteine 176, which acts as the Thioimidate intermediate. Residue 205–228 (IIADGGIRTHGDIAKSVRFGATMV) participates in NADP(+) binding.

The protein belongs to the IMPDH/GMPR family. GuaC type 2 subfamily.

The catalysed reaction is IMP + NH4(+) + NADP(+) = GMP + NADPH + 2 H(+). Functionally, catalyzes the irreversible NADPH-dependent deamination of GMP to IMP. It functions in the conversion of nucleobase, nucleoside and nucleotide derivatives of G to A nucleotides, and in maintaining the intracellular balance of A and G nucleotides. In Shouchella clausii (strain KSM-K16) (Alkalihalobacillus clausii), this protein is GMP reductase.